A 134-amino-acid chain; its full sequence is Thioredoxin-like protein Clot (134 aa).

Residues 1-134 (MTLKKVDANP…LILPLLAPST (134 aa)) form the Thioredoxin domain. Catalysis depends on nucleophile residues Cys48 and Cys51. Cys48 and Cys51 are disulfide-bonded.

It belongs to the thioredoxin family.

Functionally, probable thiol-disulfide oxidoreductase that may participate in various redox reactions. The polypeptide is Thioredoxin-like protein Clot (Arabidopsis thaliana (Mouse-ear cress)).